A 1186-amino-acid polypeptide reads, in one-letter code: MKTRQNKDSMSMRSGRKKEAPGPREELRSRGRASPGGVSTSSSDGKAEKSRQTAKKARVEEASTPKVNKQGRSEEISESESEETNAPKKTKTEELPRPQSPSDLDSLDGRSLNDDGSSDPRDIDQDNRSTSPSIYSPGSVENDSDSSSGLSQGPARPYHPPPLFPPSPQPPDSTPRQPEASFEPHPSVTPTGYHAPMEPPTSRMFQAPPGAPPPHPQLYPGGTGGVLSGPPMGPKGGGAASSVGGPNGGKQHPPPTTPISVSSSGASGAPPTKPPTTPVGGGNLPSAPPPANFPHVTPNLPPPPALRPLNNASASPPGLGAQPLPGHLPSPHAMGQGMGGLPPGPEKGPTLAPSPHSLPPASSSAPAPPMRFPYSSSSSSSAAASSSSSSSSSSASPFPASQALPSYPHSFPPPTSLSVSNQPPKYTQPSLPSQAVWSQGPPPPPPYGRLLANSNAHPGPFPPSTGAQSTAHPPVSTHHHHHQQQQQQQQQQQQQQQQHHGNSGPPPPGAFPHPLEGGSSHHAHPYAMSPSLGSLRPYPPGPAHLPPPHSQVSYSQAGPNGPPVSSSSNSSSSTSQGSYPCSHPSPSQGPQGAPYPFPPVPTVTTSSATLSTVIATVASSPAGYKTASPPGPPPYGKRAPSPGAYKTATPPGYKPGSPPSFRTGTPPGYRGTSPPAGPGTFKPGSPTVGPGPLPPAGPSGLPSLPPPPAAPASGPPLSATQIKQEPAEEYETPESPVPPARSPSPPPKVVDVPSHASQSARFNKHLDRGFNSCARSDLYFVPLEGSKLAKKRADLVEKVRREAEQRAREEKEREREREREKEREREKERELERSVKLAQEGRAPVECPSLGPVPHRPPFEPGSAVATVPPYLGPDTPALRTLSEYARPHVMSPGNRNHPFYVPLGAVDPGLLGYNVPALYSSDPAAREREREARERDLRDRLKPGFEVKPSELEPLHGVPGPGLDPFPRHGGLALQPGPPGLHPFPFHPSLGPLERERLALAAGPALRPDMSYAERLAAERQHAERVAALGNDPLARLQMLNVTPHHHQHSHIHSHLHLHQQDAIHAASASVHPLIDPLASGSHLTRIPYPAGTLPNPLLPHPLHENEVLRHQLFAAPYRDLPASLSAPMSAAHQLQAMHAQSAELQRLALEQQQWLHAHHPLHSVPLPAQEDYYSHLKKESDKPL.

Disordered regions lie at residues 1–604 (MKTR…PTVT), 618–763 (ASSP…ARFN), and 781–858 (VPLE…HRPP). A Nuclear localization signal motif is present at residues 16-32 (RKKEAPGPREELRSRGR). Residues 17–29 (KKEAPGPREELRS) are compositionally biased toward basic and acidic residues. Serine 34 bears the Phosphoserine mark. Residues 45-63 (GKAEKSRQTAKKARVEEAS) show a composition bias toward basic and acidic residues. A phosphoserine mark is found at serine 77, serine 79, serine 100, serine 102, and serine 106. The segment covering 107–127 (LDGRSLNDDGSSDPRDIDQDN) has biased composition (basic and acidic residues). Positions 128–151 (RSTSPSIYSPGSVENDSDSSSGLS) are enriched in polar residues. Positions 157–173 (PYHPPPLFPPSPQPPDS) are enriched in pro residues. Low complexity-rich tracts occupy residues 258 to 270 (PISV…SGAP), 349 to 365 (PTLA…SSSA), and 375 to 396 (SSSS…SSAS). Positions 416-437 (SLSVSNQPPKYTQPSLPSQAVW) are enriched in polar residues. Low complexity predominate over residues 484–503 (QQQQQQQQQQQQQQQHHGNS). Residues 513 to 563 (HPLEGGSSHHAHPYAMSPSLGSLRPYPPGPAHLPPPHSQVSYSQAGPNGPP) form an involved in binding BAIAP2 region. Residues 537–549 (PYPPGPAHLPPPH) are compositionally biased toward pro residues. Low complexity-rich tracts occupy residues 565–582 (SSSS…YPCS) and 618–628 (ASSPAGYKTAS). Serine 628 carries the post-translational modification Phosphoserine. N6-acetyllysine is present on lysine 637. Residue threonine 649 is modified to Phosphothreonine. Serine 657 carries the post-translational modification Phosphoserine. Phosphothreonine is present on threonine 665. 2 stretches are compositionally biased toward pro residues: residues 689 to 714 (GPGP…PASG) and 735 to 748 (SPVP…PPPK). The residue at position 735 (serine 735) is a Phosphoserine; by MAPK8. A phosphoserine mark is found at serine 742 and serine 744. Residues 791–835 (KRADLVEKVRREAEQRAREEKEREREREREKEREREKERELERSV) are compositionally biased toward basic and acidic residues. The required for interaction with FAT1 stretch occupies residues 875 to 890 (DTPALRTLSEYARPHV). Position 892 is a phosphoserine (serine 892). The Nuclear export signal signature appears at 1029-1037 (ALGNDPLAR). Asymmetric dimethylarginine is present on arginine 1111. Lysine 1179 participates in a covalent cross-link: Glycyl lysine isopeptide (Lys-Gly) (interchain with G-Cter in SUMO2).

In terms of assembly, interacts with NR2E1; the interaction represses the transcriptional activity of NR2E1. Interacts with BAIAP2, WWP1, WWP2, WWP3 and RERE. Interacts (via its N-terminus) with MTG8; the interaction enhances transcriptional repression of MTG8. Interacts with FAT1 (via a C-terminal domain). Interacts with PQBP1. Post-translationally, phosphorylated in vitro by MAPK8/JNK1 on Ser-735.

The protein localises to the nucleus. Its subcellular location is the cytoplasm. It localises to the perinuclear region. It is found in the cell junction. In terms of biological role, transcriptional corepressor. Corepressor of MTG8 transcriptional repression. Recruits NR2E1 to repress transcription. Has some intrinsic repression activity. Promotes vascular smooth cell (VSMC) migration and orientation. The chain is Atrophin-1 (ATN1) from Pan troglodytes (Chimpanzee).